The primary structure comprises 67 residues: Retron Se72 cold shock-like protein (67 aa).

The CSD domain maps to 1–66 (MENGFVNFYD…KGFKAVAIQK (66 aa)).

Functionally, probable cold shock-like component of antiviral defense system retron Se72, composed of a non-coding RNA (ncRNA), a reverse transcriptase (RT) and this protein. Expression of retron Se72 confers protection against bacteriophage lambda. At multiplicity of infection (MOI) of 0.02 cultures slow growth when infected with lambda but do not collapse, at MOI 2 cultures enter growth stasis. The sequence is that of Retron Se72 cold shock-like protein from Salmonella heidelberg (strain 579083-10).